A 342-amino-acid chain; its full sequence is Dihydroorotase (342 aa).

Zn(2+) contacts are provided by histidine 13 and histidine 15. Substrate-binding positions include 15 to 17 and asparagine 41; that span reads HLR. 3 residues coordinate Zn(2+): lysine 99, histidine 136, and histidine 174. At lysine 99 the chain carries N6-carboxylysine. Histidine 136 is a binding site for substrate. Substrate is bound at residue leucine 218. Aspartate 246 is a Zn(2+) binding site. Aspartate 246 is an active-site residue. Residues histidine 250 and alanine 262 each contribute to the substrate site.

It belongs to the metallo-dependent hydrolases superfamily. DHOase family. Class II DHOase subfamily. Homodimer. Requires Zn(2+) as cofactor.

It carries out the reaction (S)-dihydroorotate + H2O = N-carbamoyl-L-aspartate + H(+). The protein operates within pyrimidine metabolism; UMP biosynthesis via de novo pathway; (S)-dihydroorotate from bicarbonate: step 3/3. Functionally, catalyzes the reversible cyclization of carbamoyl aspartate to dihydroorotate. This chain is Dihydroorotase, found in Synechocystis sp. (strain ATCC 27184 / PCC 6803 / Kazusa).